A 259-amino-acid chain; its full sequence is Deoxyribose-phosphate aldolase (259 aa).

D102 (proton donor/acceptor) is an active-site residue. The active-site Schiff-base intermediate with acetaldehyde is the K167. K201 serves as the catalytic Proton donor/acceptor.

This sequence belongs to the DeoC/FbaB aldolase family. DeoC type 2 subfamily.

The protein resides in the cytoplasm. It catalyses the reaction 2-deoxy-D-ribose 5-phosphate = D-glyceraldehyde 3-phosphate + acetaldehyde. It functions in the pathway carbohydrate degradation; 2-deoxy-D-ribose 1-phosphate degradation; D-glyceraldehyde 3-phosphate and acetaldehyde from 2-deoxy-alpha-D-ribose 1-phosphate: step 2/2. In terms of biological role, catalyzes a reversible aldol reaction between acetaldehyde and D-glyceraldehyde 3-phosphate to generate 2-deoxy-D-ribose 5-phosphate. This is Deoxyribose-phosphate aldolase from Escherichia coli (strain SMS-3-5 / SECEC).